The primary structure comprises 205 residues: Pyridoxal 5'-phosphate synthase subunit PdxT (205 aa).

52–54 provides a ligand contact to L-glutamine; that stretch reads GES. The active-site Nucleophile is Cys-84. L-glutamine contacts are provided by residues Arg-116 and 145-146; that span reads IR. Catalysis depends on charge relay system residues His-185 and Glu-187.

It belongs to the glutaminase PdxT/SNO family. As to quaternary structure, in the presence of PdxS, forms a dodecamer of heterodimers. Only shows activity in the heterodimer.

The enzyme catalyses aldehydo-D-ribose 5-phosphate + D-glyceraldehyde 3-phosphate + L-glutamine = pyridoxal 5'-phosphate + L-glutamate + phosphate + 3 H2O + H(+). It carries out the reaction L-glutamine + H2O = L-glutamate + NH4(+). Its pathway is cofactor biosynthesis; pyridoxal 5'-phosphate biosynthesis. Its function is as follows. Catalyzes the hydrolysis of glutamine to glutamate and ammonia as part of the biosynthesis of pyridoxal 5'-phosphate. The resulting ammonia molecule is channeled to the active site of PdxS. The chain is Pyridoxal 5'-phosphate synthase subunit PdxT from Staphylothermus marinus (strain ATCC 43588 / DSM 3639 / JCM 9404 / F1).